The sequence spans 398 residues: tRNA-specific 2-thiouridylase MnmA (398 aa).

ATP-binding positions include 33-40 (GMSGGVDS) and M59. Positions 119–121 (NPD) are interaction with target base in tRNA. Catalysis depends on C124, which acts as the Nucleophile. C124 and C226 form a disulfide bridge. G148 contributes to the ATP binding site. Positions 176–178 (KDQ) are interaction with tRNA. The active-site Cysteine persulfide intermediate is the C226. The interval 343 to 344 (RY) is interaction with tRNA.

The protein belongs to the MnmA/TRMU family.

It localises to the cytoplasm. The catalysed reaction is S-sulfanyl-L-cysteinyl-[protein] + uridine(34) in tRNA + AH2 + ATP = 2-thiouridine(34) in tRNA + L-cysteinyl-[protein] + A + AMP + diphosphate + H(+). In terms of biological role, catalyzes the 2-thiolation of uridine at the wobble position (U34) of tRNA, leading to the formation of s(2)U34. The sequence is that of tRNA-specific 2-thiouridylase MnmA from Psychrobacter sp. (strain PRwf-1).